The primary structure comprises 454 residues: NADH-quinone oxidoreductase subunit H (454 aa).

Helical transmembrane passes span 18–38, 88–108, 131–151, 172–192, 206–226, 256–276, 296–316, 328–348, and 360–380; these read WWLV…TVLF, VVYV…IAVI, LPIA…GIVL, MISY…YSGS, WYIV…VGET, FMLA…TLFL, WWPM…FIWL, LMKL…MLVA, and FADI…LSFV. The disordered stretch occupies residues 395–454; sequence AEEPAAFDPMAGGFPVPPLPGQTLPPVPRRRPRRDRELIVSGGPDTASDGPANGKEASDG. Residues 409–421 show a composition bias toward pro residues; that stretch reads PVPPLPGQTLPPV.

This sequence belongs to the complex I subunit 1 family. NDH-1 is composed of 14 different subunits. Subunits NuoA, H, J, K, L, M, N constitute the membrane sector of the complex.

It localises to the cell membrane. The enzyme catalyses a quinone + NADH + 5 H(+)(in) = a quinol + NAD(+) + 4 H(+)(out). Functionally, NDH-1 shuttles electrons from NADH, via FMN and iron-sulfur (Fe-S) centers, to quinones in the respiratory chain. The immediate electron acceptor for the enzyme in this species is believed to be ubiquinone. Couples the redox reaction to proton translocation (for every two electrons transferred, four hydrogen ions are translocated across the cytoplasmic membrane), and thus conserves the redox energy in a proton gradient. This subunit may bind ubiquinone. This is NADH-quinone oxidoreductase subunit H from Streptomyces avermitilis (strain ATCC 31267 / DSM 46492 / JCM 5070 / NBRC 14893 / NCIMB 12804 / NRRL 8165 / MA-4680).